The chain runs to 427 residues: Methylenetetrahydrofolate--tRNA-(uracil-5-)-methyltransferase TrmFO (427 aa).

8–13 provides a ligand contact to FAD; the sequence is GAGISG.

It belongs to the MnmG family. TrmFO subfamily. It depends on FAD as a cofactor.

It localises to the cytoplasm. It carries out the reaction uridine(54) in tRNA + (6R)-5,10-methylene-5,6,7,8-tetrahydrofolate + NADH + H(+) = 5-methyluridine(54) in tRNA + (6S)-5,6,7,8-tetrahydrofolate + NAD(+). The enzyme catalyses uridine(54) in tRNA + (6R)-5,10-methylene-5,6,7,8-tetrahydrofolate + NADPH + H(+) = 5-methyluridine(54) in tRNA + (6S)-5,6,7,8-tetrahydrofolate + NADP(+). Its function is as follows. Catalyzes the folate-dependent formation of 5-methyl-uridine at position 54 (M-5-U54) in all tRNAs. This is Methylenetetrahydrofolate--tRNA-(uracil-5-)-methyltransferase TrmFO from Mycoplasmopsis agalactiae (strain NCTC 10123 / CIP 59.7 / PG2) (Mycoplasma agalactiae).